The following is an 896-amino-acid chain: Serine/threonine-protein kinase TAO3 (896 aa).

The region spanning 24–277 (FVDLHEIGHG…SLELLRHDFV (254 aa)) is the Protein kinase domain. Residues 30 to 38 (IGHGSFGAV) and Lys-53 contribute to the ATP site. Asp-147 (proton acceptor) is an active-site residue. Disordered stretches follow at residues 316 to 366 (SRNG…SVNS) and 403 to 423 (DEADHRDPRPELRPTQSVQSQ). A compositionally biased stretch (polar residues) spans 334–348 (GTSLTRKMDSLGSNH). The span at 349–366 (SIPSTSVSTGSQSSSVNS) shows a compositional bias: low complexity. Residues 403–414 (DEADHRDPRPEL) show a composition bias toward basic and acidic residues. Coiled-coil stretches lie at residues 450–513 (EQEN…SKRQ), 545–650 (SFLE…LIRQ), and 752–873 (LKSL…IETF). Residues 565–587 (LNEDHSTPKKEKQERISKHKENL) are compositionally biased toward basic and acidic residues. A disordered region spans residues 565 to 593 (LNEDHSTPKKEKQERISKHKENLQHTQAE).

The protein belongs to the protein kinase superfamily. STE Ser/Thr protein kinase family. STE20 subfamily.

It localises to the cytoplasm. The protein resides in the cell membrane. The protein localises to the membrane raft. It is found in the lipid droplet. It carries out the reaction L-seryl-[protein] + ATP = O-phospho-L-seryl-[protein] + ADP + H(+). It catalyses the reaction L-threonyl-[protein] + ATP = O-phospho-L-threonyl-[protein] + ADP + H(+). Its function is as follows. Serine/threonine-protein kinase that acts as a regulator of the p38/MAPK14 stress-activated MAPK cascade and of the MAPK8/JNK cascade. In response to DNA damage, involved in the G2/M transition DNA damage checkpoint by activating the p38/MAPK14 stress-activated MAPK cascade, probably by mediating phosphorylation of upstream MAP kinase kinases. Inhibits basal activity of the MAPK8/JNK cascade. In Xenopus laevis (African clawed frog), this protein is Serine/threonine-protein kinase TAO3 (taok3).